A 2310-amino-acid polypeptide reads, in one-letter code: Peroxide stress-activated histidine kinase mak2 (2310 aa).

Residues 12–292 enclose the Protein kinase domain; that stretch reads DYAISQLGEF…SATDLCYTIV (281 aa). The GAF domain maps to 1450–1592; it reads RLGPLLTTVI…LLSQQIAISV (143 aa). Residues 1760 to 1986 enclose the Histidine kinase domain; sequence NMSHELRTPF…TFWFHVQLRN (227 aa). Residue H1763 is modified to Phosphohistidine; by autocatalysis. A Response regulatory domain is found at 2180-2303; that stretch reads YALIAEDNLI…QLVNAVREFV (124 aa). A 4-aspartylphosphate modification is found at D2232.

The protein resides in the cytoplasm. The catalysed reaction is ATP + protein L-histidine = ADP + protein N-phospho-L-histidine.. Its function is as follows. Involved in the control of the SAPK-dependent transcriptional response to peroxide stress. Regulates sty1 activity. The protein is Peroxide stress-activated histidine kinase mak2 (mak2) of Schizosaccharomyces pombe (strain 972 / ATCC 24843) (Fission yeast).